We begin with the raw amino-acid sequence, 304 residues long: Signal recognition particle receptor FtsY (304 aa).

Residues 109-116 (GVNGVGKT), 191-195 (DTAGR), and 255-258 (TKLD) each bind GTP.

It belongs to the GTP-binding SRP family. FtsY subfamily. In terms of assembly, part of the signal recognition particle protein translocation system, which is composed of SRP and FtsY. Sensitive to endogenous proteolytic cleavage between residues 18 and 19 and between residues 86 and 87.

It localises to the cell membrane. The protein localises to the cytoplasm. The enzyme catalyses GTP + H2O = GDP + phosphate + H(+). Functionally, involved in targeting and insertion of nascent membrane proteins into the cytoplasmic membrane. Acts as a receptor for the complex formed by the signal recognition particle (SRP) and the ribosome-nascent chain (RNC). The chain is Signal recognition particle receptor FtsY from Thermus aquaticus.